We begin with the raw amino-acid sequence, 194 residues long: uncharacterized protein (194 aa).

Disordered stretches follow at residues 1–21 and 73–97; these read MPKG…APPL and PATV…PWPS. The segment covering 73–96 has biased composition (pro residues); that stretch reads PATVPPPPPGLGPPSERPCPPPWP.

This is an uncharacterized protein from Mus musculus (Mouse).